Reading from the N-terminus, the 721-residue chain is BRCA1-A complex subunit RAP80 (721 aa).

The segment at 1 to 65 (MPRRKKKGKE…GLQKTKIKQS (65 aa)) is disordered. Residues 1–101 (MPRRKKKGKE…SEQEAREVNS (101 aa)) form a necessary for transcriptional repression region. A Glycyl lysine isopeptide (Lys-Gly) (interchain with G-Cter in SUMO2) cross-link involves residue K20. Phosphoserine is present on S29. Residue K31 forms a Glycyl lysine isopeptide (Lys-Gly) (interchain with G-Cter in SUMO2) linkage. Phosphoserine is present on residues S44 and S46. The LR motif motif lies at 60-78 (TKIKQSSRAKCLAKRKIAQ). Residues K75 and K90 each participate in a glycyl lysine isopeptide (Lys-Gly) (interchain with G-Cter in SUMO2) cross-link. The UIM 1 domain maps to 80 to 99 (TEEEQFALALKMSEQEAREV). The segment at 93 to 204 (EQEAREVNSQ…SVSSGSWDQS (112 aa)) is disordered. The segment at 97-103 (REVNSQE) is UIM-linker. A necessary for interaction with NR6A1 N-terminus region spans residues 100-200 (NSQEEEEEEL…EEPVSVSSGS (101 aa)). S101 is subject to Phosphoserine. Residues 105–124 (EEEELLRKAIAESLNSCRPS) enclose the UIM 2 domain. A compositionally biased stretch (polar residues) spans 117 to 130 (SLNSCRPSDASATR). Phosphoserine is present on S140. A compositionally biased stretch (low complexity) spans 194–204 (VSVSSGSWDQS). A Phosphoserine modification is found at S205. K245 is covalently cross-linked (Glycyl lysine isopeptide (Lys-Gly) (interchain with G-Cter in SUMO2)). Residues 270-400 (TGGTVNYFWG…EEEPTTSHGQ (131 aa)) form an AIR region. The disordered stretch occupies residues 334 to 369 (NECGQGEQASEKNEGISEDMGDEDKEERQESRASVW). Residues 349–358 (ISEDMGDEDK) show a composition bias toward acidic residues. Glycyl lysine isopeptide (Lys-Gly) (interchain with G-Cter in SUMO2) cross-links involve residues K382 and K387. A disordered region spans residues 391–418 (EEEPTTSHGQSSQGLFVEETSEEGNSVP). The necessary for interaction with NR6A1 C-terminus stretch occupies residues 400–500 (QSSQGLFVEE…EIHTSTFSSS (101 aa)). A phosphoserine mark is found at S402 and S420. A Glycyl lysine isopeptide (Lys-Gly) (interchain with G-Cter in SUMO2) cross-link involves residue K429. S467 is modified (phosphoserine). Residues 502–529 (QVSCPLCDQGFPPTKIERHAMYCNGLMG) form a UBZ4-type zinc finger. Zn(2+) contacts are provided by C505, C508, H520, and C524. A zinc-finger-like region region spans residues 505 to 582 (CPLCDQGFPP…REYQCHVESC (78 aa)). Glycyl lysine isopeptide (Lys-Gly) (interchain with G-Cter in SUMO2) cross-links involve residues K544, K559, K562, and K607. Position 627 is a phosphoserine (S627). Residues K635 and K642 each participate in a glycyl lysine isopeptide (Lys-Gly) (interchain with G-Cter in SUMO2) cross-link. Phosphoserine is present on residues S655 and S679. Glycyl lysine isopeptide (Lys-Gly) (interchain with G-Cter in SUMO2) cross-links involve residues K698 and K699.

This sequence belongs to the RAP80 family. Component of the ARISC complex, at least composed of UIMC1/RAP80, ABRAXAS1, BRCC3/BRCC36, BABAM2 and BABAM1/NBA1. Component of the BRCA1-A complex, at least composed of the BRCA1, BARD1, UIMC1/RAP80, ABRAXAS1, BRCC3/BRCC36, BABAM2 and BABAM1/NBA1. In the BRCA1-A complex, interacts directly with ABRAXAS1. Interacts with UBE2I. Interacts with NR6A1. Interacts with ESR1. Interacts with TSP57. Interacts with TRAIP. In terms of processing, sumoylated. Phosphorylated upon DNA damage by ATM or ATR.

The protein resides in the nucleus. Functionally, ubiquitin-binding protein. Specifically recognizes and binds 'Lys-63'-linked ubiquitin. Plays a central role in the BRCA1-A complex by specifically binding 'Lys-63'-linked ubiquitinated histones H2A and H2AX at DNA lesions sites, leading to target the BRCA1-BARD1 heterodimer to sites of DNA damage at double-strand breaks (DSBs). The BRCA1-A complex also possesses deubiquitinase activity that specifically removes 'Lys-63'-linked ubiquitin on histones H2A and H2AX. Also weakly binds monoubiquitin but with much less affinity than 'Lys-63'-linked ubiquitin. May interact with monoubiquitinated histones H2A and H2B; the relevance of such results is however unclear in vivo. Does not bind Lys-48'-linked ubiquitin. May indirectly act as a transcriptional repressor by inhibiting the interaction of NR6A1 with the corepressor NCOR1. This Sus scrofa (Pig) protein is BRCA1-A complex subunit RAP80 (UIMC1).